A 200-amino-acid chain; its full sequence is ATP-dependent Clp protease proteolytic subunit (200 aa).

Catalysis depends on S105, which acts as the Nucleophile. H130 is an active-site residue.

This sequence belongs to the peptidase S14 family. In terms of assembly, fourteen ClpP subunits assemble into 2 heptameric rings which stack back to back to give a disk-like structure with a central cavity, resembling the structure of eukaryotic proteasomes.

Its subcellular location is the cytoplasm. The catalysed reaction is Hydrolysis of proteins to small peptides in the presence of ATP and magnesium. alpha-casein is the usual test substrate. In the absence of ATP, only oligopeptides shorter than five residues are hydrolyzed (such as succinyl-Leu-Tyr-|-NHMec, and Leu-Tyr-Leu-|-Tyr-Trp, in which cleavage of the -Tyr-|-Leu- and -Tyr-|-Trp bonds also occurs).. Its function is as follows. Cleaves peptides in various proteins in a process that requires ATP hydrolysis. Has a chymotrypsin-like activity. Plays a major role in the degradation of misfolded proteins. The polypeptide is ATP-dependent Clp protease proteolytic subunit (Hydrogenovibrio crunogenus (strain DSM 25203 / XCL-2) (Thiomicrospira crunogena)).